The primary structure comprises 267 residues: NADP-dependent mannitol dehydrogenase (267 aa).

NADP(+) contacts are provided by Asn-108 and Lys-141. The active-site Proton donor is the Ser-160. NADP(+) contacts are provided by Tyr-175, Lys-179, Ile-207, and Thr-209. The active-site Proton acceptor is Tyr-175. Residue Lys-179 is the Lowers pKa of active site Tyr of the active site.

It belongs to the short-chain dehydrogenases/reductases (SDR) family. Exists as monomer, dimer and tetramer.

The enzyme catalyses D-mannitol + NADP(+) = D-fructose + NADPH + H(+). Functionally, interconverts D-mannitol and D-fructose. Not active with fructose 6-phosphate or NADH. This chain is NADP-dependent mannitol dehydrogenase, found in Davidiella tassiana (Mycosphaerella tassiana).